The sequence spans 216 residues: Dimethylamine corrinoid protein 2 (216 aa).

Residues 1–91 (MASKEELLQE…EMPAGTETKK (91 aa)) form the B12-binding N-terminal domain. The 125-residue stretch at 92 to 216 (LGVIVNGTVE…AKAKELLLGK (125 aa)) folds into the B12-binding domain. Histidine 105 serves as a coordination point for methylcob(III)alamin.

This sequence belongs to the methylamine corrinoid protein family.

Its pathway is one-carbon metabolism; methanogenesis from dimethylamine. In terms of biological role, acts as a methyl group carrier between MtbB and MtbA. This chain is Dimethylamine corrinoid protein 2 (mtbC2), found in Methanosarcina acetivorans (strain ATCC 35395 / DSM 2834 / JCM 12185 / C2A).